The chain runs to 591 residues: Cytidine monophosphate-N-acetylneuraminic acid hydroxylase (591 aa).

A Rieske domain is found at 16-114; that stretch reads LASAEVESLK…IENDDENGVS (99 aa). Residues Cys-56, His-58, Cys-77, and His-80 each coordinate [2Fe-2S] cluster.

It belongs to the CMP-Neu5Ac hydroxylase family. [2Fe-2S] cluster is required as a cofactor.

The protein resides in the cytoplasm. It carries out the reaction CMP-N-acetyl-beta-neuraminate + 2 Fe(II)-[cytochrome b5] + O2 + 2 H(+) = CMP-N-glycoloyl-beta-neuraminate + 2 Fe(III)-[cytochrome b5] + H2O. It functions in the pathway amino-sugar metabolism; N-acetylneuraminate metabolism. Its function is as follows. Sialic acids are components of carbohydrate chains of glycoconjugates and are involved in cell-cell recognition and cell-pathogen interactions. Catalyzes the conversion of CMP-N-acetylneuraminic acid (CMP-Neu5Ac) into its hydroxylated derivative CMP-N-glycolylneuraminic acid (CMP-Neu5Gc), a sialic acid abundantly expressed at the surface of many cells. This chain is Cytidine monophosphate-N-acetylneuraminic acid hydroxylase (cmah), found in Xenopus laevis (African clawed frog).